Consider the following 452-residue polypeptide: Minor capsid protein (452 aa).

Basic and acidic residues-rich tracts occupy residues 219–236 and 247–258; these read VDKP…KGKQ and GKPDISKPGEKQ. Positions 219 to 258 are disordered; that stretch reads VDKPEDKPKPVFDDKGKQPTDTVPPVDNGKPDISKPGEKQ.

It belongs to the closteroviridae minor capsid protein family.

The protein resides in the virion. Minor capsid protein that encapsidates the 5'-terminal portion of the viral genome. This chain is Minor capsid protein, found in Lettuce infectious yellows virus (isolate United States/92) (LIYV).